Reading from the N-terminus, the 336-residue chain is Uridine nucleosidase 1 (336 aa).

Active-site residues include D29 and H260.

It belongs to the IUNH family. As to quaternary structure, homodimer. Component of the NSH heterocomplex made of URH1/NSH1 and URH2/NSH2 which exhibits strong xanthosine nucleosidase activity. Interacts with URH2. Expressed ubiquitously in leaves, flowers, stems, pollen cells, root tip meristem and root vasculature.

It is found in the cytoplasm. It carries out the reaction uridine + H2O = D-ribose + uracil. The enzyme catalyses xanthosine + H2O = D-ribose + xanthine. It catalyses the reaction inosine + H2O = hypoxanthine + D-ribose. The catalysed reaction is adenosine + H2O = D-ribose + adenine. Involved in purine and pyrimidine breakdown rather than in pyrimidine salvage, especially in response to dark stress. Together with URH2, required for efficient inosine and xanthosine hydrolytic activities. Unable to use cytidine as a substrate. Can use uridine, inosine, adenosine as well as the cytokinin derivative isopentenyladenine-riboside as substrates. Also hydrolyzes xanthosine with high efficiency. This is Uridine nucleosidase 1 from Arabidopsis thaliana (Mouse-ear cress).